Reading from the N-terminus, the 397-residue chain is Translocase of chloroplast 34 homolog, chloroplastic (397 aa).

The segment at 1–72 is disordered; it reads MAQPPRPAEE…SQPWAGLNRL (72 aa). 2 stretches are compositionally biased toward acidic residues: residues 10–32 and 44–63; these read EYDDDVQEDEDELKEGELDDDES and AGDEEAEDDEQDEEDGDEDS. Positions 90–321 constitute an AIG1-type G domain; the sequence is RKQLTVLLLG…YKYHPRLSSK (232 aa). Residues 99-106 form a G1 region; that stretch reads GKSSVGKS. GTP is bound by residues 102–107 and 121–126; these read SVGKSS and QAFKLQ. Residue S106 participates in Mg(2+) binding. The interval 121–124 is homodimerization; it reads QAFK. Residues 126–130 form a G2 region; sequence QADTD. A G3 region spans residues 155 to 158; sequence DTCG. Positions 193-198 are homodimerization; that stretch reads RLDLYR. A G4 region spans residues 227 to 230; the sequence is THAN. GTP-binding positions include H228 and 271–272; that span reads EN. The segment at 271-273 is G5; it reads ENS. A helical transmembrane segment spans residues 329–349; sequence LLPVAIAAEVLFYRRFLHPRL. Residues 350 to 358 carry the AKR2A-binding sequence (ABS) required for chloroplast outer envelope membrane targeting motif; the sequence is DDNQRRVER.

This sequence belongs to the TRAFAC class TrmE-Era-EngA-EngB-Septin-like GTPase superfamily. AIG1/Toc34/Toc159-like paraseptin GTPase family. TOC34 subfamily. In terms of assembly, homodimer, heterodimer with other TOC proteins, and monomer. Part of the TOC core complex that includes 1 protein for the specific recognition of transit peptides surrounded by a ring composed of four proteins forming translocation channels, and four to five GTP-binding proteins providing energy. This core complex can interact with components of the TIC complex to form a larger import complex. Interacts with ARSA1. It depends on Mg(2+) as a cofactor.

Its subcellular location is the plastid. The protein resides in the chloroplast outer membrane. Functionally, GTPase involved in protein precursor import into chloroplasts. Seems to recognize chloroplast-destined precursor proteins and regulate their presentation to the translocation channel through GTP hydrolysis. Functions as an essential component of the outer chloroplast membrane translocon (TOC) complex, which, in turn, catalyzes the import of nucleus-encoded precursor polypeptides from the cytoplasm to the chloroplast. In Chlamydomonas reinhardtii (Chlamydomonas smithii), this protein is Translocase of chloroplast 34 homolog, chloroplastic.